A 606-amino-acid polypeptide reads, in one-letter code: MVEGPGCTLNGEKIRARVRPGQAVTDVRGRALQGLGGPGSPPAAPGPMGTSQAAALNNNKNSSQDFLRLFNGHGYSGVETLGKELFMYFGPKALRIHFGMKGSLVINPLESKNKNGVSPVFEVQLTKDLICFFDSSVEIRNSTESQQRIRVMEELDVCSPRFSFSRAESEVKKQKGRMLCDVLMDQKVLPGVGNIIKNEALFDSGFHPSVKVCQLTDEQIHHLVKMIRNFSILFYRCCKVGSALSKHYKVYKRPNCGQCCCKITVCRLGENNRMTYFCPHCQKENPQHVDIRMLPVRNTTVNWPSSRERHLMDCVAQKSEEQWTCEVCTLINKLSSKTCDACLTSRPADSVLRNEGNPIVFNNLMKYPCNSFGKSKAKVKINRKTAFGTTTLVLTDFSNKHSALEREESHSHIPDGEFPSPPPNVCGSDTLNTSKERTNCRSQPSDKVNISPVVCSQYKLFSPAHKKLKTTHYSSPDLKSCNPGFSNSELQSSMTDGPCLLNAGSPRCSKHGRPCALRVVRKSGENKGRHFYACPLAREAQCGFFEWADLSFPFCNHGKRSIMRTVLKIGPNNGKNFFVCPLGKEKQCNFFQWAQNGPGINIIPGC.

Val2 functions as the Schiff-base intermediate with DNA; via amino nitrogen in the catalytic mechanism. The tract at residues 31–51 is disordered; sequence ALQGLGGPGSPPAAPGPMGTS. DNA contacts are provided by Asn194 and Arg273. The FPG-type zinc-finger motif lies at 249-283; sequence KVYKRPNCGQCCCKITVCRLGENNRMTYFCPHCQK. The RanBP2-type zinc-finger motif lies at 319 to 348; that stretch reads SEEQWTCEVCTLINKLSSKTCDACLTSRPA. Residue Ser451 is modified to Phosphoserine. Residues Cys508, His511, Cys534, Cys542, Cys555, His557, Cys580, and Cys588 each contribute to the Zn(2+) site. GRF-type zinc fingers lie at residues 508–551 and 555–597; these read CSKH…ADLS and CNHG…AQNG.

This sequence belongs to the FPG family.

Its subcellular location is the nucleus. It localises to the chromosome. It carries out the reaction 2'-deoxyribonucleotide-(2'-deoxyribose 5'-phosphate)-2'-deoxyribonucleotide-DNA = a 3'-end 2'-deoxyribonucleotide-(2,3-dehydro-2,3-deoxyribose 5'-phosphate)-DNA + a 5'-end 5'-phospho-2'-deoxyribonucleoside-DNA + H(+). In terms of biological role, DNA glycosylase which prefers single-stranded DNA (ssDNA), or partially ssDNA structures such as bubble and fork structures, to double-stranded DNA (dsDNA). Mediates interstrand cross-link repair in response to replication stress: acts by mediating DNA glycosylase activity, cleaving one of the two N-glycosyl bonds comprising the interstrand cross-link, which avoids the formation of a double-strand break but generates an abasic site that is bypassed by translesion synthesis polymerases. In vitro, displays strong glycosylase activity towards the hydantoin lesions spiroiminodihydantoin (Sp) and guanidinohydantoin (Gh) in both ssDNA and dsDNA; also recognizes FapyA, FapyG, 5-OHU, 5-OHC, 5-OHMH, Tg and 8-oxoA lesions in ssDNA. No activity on 8-oxoG detected. Also shows weak DNA-(apurinic or apyrimidinic site) lyase activity. In vivo, appears to be the primary enzyme involved in removing Sp and Gh from ssDNA in neonatal tissues. In Bos taurus (Bovine), this protein is Endonuclease 8-like 3 (NEIL3).